The following is a 742-amino-acid chain: Collectin-12 (742 aa).

At 1–37 the chain is on the cytoplasmic side; sequence MKDDFAEEEEVQSFGYKRFGIQEGTQCTKCKNNWALK. Residues 38-58 traverse the membrane as a helical; Signal-anchor for type II membrane protein segment; it reads FSIILLYVLCALLTITVAILG. Residues 59 to 742 lie on the Extracellular side of the membrane; it reads YKVVEKMDTV…EREAVPSSIL (684 aa). A coiled-coil region spans residues 104–142; that stretch reads TNSELSTFRSDILDLRQQLQEITEKTSKNKDMLEKLQAN. N-linked (GlcNAc...) asparagine glycosylation is found at asparagine 159, asparagine 168, and asparagine 271. A coiled-coil region spans residues 220–301; sequence ITNLQRSVDD…SFTGQMDNIT (82 aa). Residues 439–608 form a disordered region; that stretch reads TILQGPPGPR…TPASEVNGCP (170 aa). Collagen-like domains follow at residues 452 to 511 and 527 to 586; these read GDRG…KGSR and GPPG…PGPS. Over residues 501 to 514 the composition is skewed to low complexity; it reads SKGSQGPKGSRGSP. Residues 516 to 532 are compositionally biased toward pro residues; sequence KPGPQGPSGDPGPPGPP. Residues 534 to 556 show a composition bias toward low complexity; sequence KDGLPGPQGPPGFQGLQGTVGEP. Residues 571-585 show a composition bias toward pro residues; the sequence is PGMPGPKGPPGPPGP. 3 cysteine pairs are disulfide-bonded: cysteine 607-cysteine 618, cysteine 635-cysteine 730, and cysteine 708-cysteine 722. The region spanning 614-731 is the C-type lectin domain; it reads FTDKCYYFSV…CDEINNFICE (118 aa). Ca(2+)-binding residues include phenylalanine 644, asparagine 646, glutamate 650, aspartate 670, and glutamate 674. A carbohydrate is bound by residues lysine 691, glutamine 694, and aspartate 696. Residues glutamine 694, aspartate 696, asparagine 697, glutamate 706, aspartate 707, asparagine 718, aspartate 719, and glutamate 731 each contribute to the Ca(2+) site. Residue glutamate 706 participates in a carbohydrate binding. Residues asparagine 718 and aspartate 719 each coordinate a carbohydrate.

In terms of assembly, the extracellular domain forms a stable trimer. The extracellular domain interacts with fibrillar amyloid-beta peptide. In terms of tissue distribution, highly expressed in lung, spleen, small and large intestine, stomach and brain. Expressed in neonatal microglia.

It localises to the membrane. In terms of biological role, scavenger receptor that displays several functions associated with host defense. Promotes binding and phagocytosis of Gram-positive, Gram-negative bacteria and yeast. Mediates the recognition, internalization and degradation of oxidatively modified low density lipoprotein (oxLDL) by vascular endothelial cells. Binds to several carbohydrates including Gal-type ligands, D-galactose, L- and D-fucose, GalNAc, T and Tn antigens in a calcium-dependent manner and internalizes specifically GalNAc in nurse-like cells. Also binds to sialyl Lewis X or a trisaccharide and asialo-orosomucoid (ASOR). This Rattus norvegicus (Rat) protein is Collectin-12 (Colec12).